The primary structure comprises 456 residues: tRNA-2-methylthio-N(6)-dimethylallyladenosine synthase (456 aa).

One can recognise an MTTase N-terminal domain in the interval L19–T136. [4Fe-4S] cluster contacts are provided by C28, C63, C97, C173, C177, and C180. The region spanning Q159–K389 is the Radical SAM core domain. The TRAM domain maps to K392–E455.

Belongs to the methylthiotransferase family. MiaB subfamily. As to quaternary structure, monomer. [4Fe-4S] cluster serves as cofactor.

The protein resides in the cytoplasm. The enzyme catalyses N(6)-dimethylallyladenosine(37) in tRNA + (sulfur carrier)-SH + AH2 + 2 S-adenosyl-L-methionine = 2-methylsulfanyl-N(6)-dimethylallyladenosine(37) in tRNA + (sulfur carrier)-H + 5'-deoxyadenosine + L-methionine + A + S-adenosyl-L-homocysteine + 2 H(+). Catalyzes the methylthiolation of N6-(dimethylallyl)adenosine (i(6)A), leading to the formation of 2-methylthio-N6-(dimethylallyl)adenosine (ms(2)i(6)A) at position 37 in tRNAs that read codons beginning with uridine. This Lachnoclostridium phytofermentans (strain ATCC 700394 / DSM 18823 / ISDg) (Clostridium phytofermentans) protein is tRNA-2-methylthio-N(6)-dimethylallyladenosine synthase.